The chain runs to 551 residues: Glucans biosynthesis protein D (551 aa).

Residues 1–32 (MNRRRFIKGSMAMAAVCGSSGIASLFSQAAFA) constitute a signal peptide (tat-type signal).

This sequence belongs to the OpgD/OpgG family. Predicted to be exported by the Tat system. The position of the signal peptide cleavage has not been experimentally proven.

The protein resides in the periplasm. Its pathway is glycan metabolism; osmoregulated periplasmic glucan (OPG) biosynthesis. In terms of biological role, probably involved in the control of the structural glucose backbone of osmoregulated periplasmic glucans (OPGs). This Salmonella paratyphi A (strain ATCC 9150 / SARB42) protein is Glucans biosynthesis protein D.